A 150-amino-acid chain; its full sequence is Sec-independent protein translocase protein TatB (150 aa).

The chain crosses the membrane as a helical span at residues Met1–Gly21. Residues Lys77–Gly86 show a composition bias toward basic and acidic residues. A disordered region spans residues Lys77–Asp150. Residues Ala109–Ser135 are compositionally biased toward pro residues.

It belongs to the TatB family. The Tat system comprises two distinct complexes: a TatABC complex, containing multiple copies of TatA, TatB and TatC subunits, and a separate TatA complex, containing only TatA subunits. Substrates initially bind to the TatABC complex, which probably triggers association of the separate TatA complex to form the active translocon.

Its subcellular location is the cell inner membrane. In terms of biological role, part of the twin-arginine translocation (Tat) system that transports large folded proteins containing a characteristic twin-arginine motif in their signal peptide across membranes. Together with TatC, TatB is part of a receptor directly interacting with Tat signal peptides. TatB may form an oligomeric binding site that transiently accommodates folded Tat precursor proteins before their translocation. The chain is Sec-independent protein translocase protein TatB from Rhodospirillum rubrum (strain ATCC 11170 / ATH 1.1.1 / DSM 467 / LMG 4362 / NCIMB 8255 / S1).